The chain runs to 267 residues: Orotidine 5'-phosphate decarboxylase (267 aa).

Substrate is bound by residues Asp38, 60 to 62 (KTH), 92 to 101 (DRKFADIGNT), Tyr218, and Arg236. Residue Lys94 is the Proton donor of the active site.

Belongs to the OMP decarboxylase family.

It carries out the reaction orotidine 5'-phosphate + H(+) = UMP + CO2. It functions in the pathway pyrimidine metabolism; UMP biosynthesis via de novo pathway; UMP from orotate: step 2/2. The protein is Orotidine 5'-phosphate decarboxylase (URA3) of Debaryomyces hansenii (strain ATCC 36239 / CBS 767 / BCRC 21394 / JCM 1990 / NBRC 0083 / IGC 2968) (Yeast).